The following is a 199-amino-acid chain: Hematopoietic prostaglandin D synthase (199 aa).

The 78-residue stretch at 2–79 (PNYKLTYFNL…YLARESGLAG (78 aa)) folds into the GST N-terminal domain. Glutathione contacts are provided by residues Tyr8, Arg14, Trp39, 49 to 51 (GKV), and 63 to 64 (QS). Positions 81 to 199 (TPVEQALADA…WIQKRPKTAI (119 aa)) constitute a GST C-terminal domain.

This sequence belongs to the GST superfamily. Sigma family. It depends on glutathione as a cofactor. As to expression, highly expressed in liver, kidney, small intestine and colon, moderately in pancreas, bone marrow, lung and ovary, and expressed at low levels in spleen, thymus, heart and brain. Not detected in oviduct or skin (at protein level). Expressed in liver.

It localises to the cytoplasm. The catalysed reaction is prostaglandin H2 = prostaglandin D2. The enzyme catalyses RX + glutathione = an S-substituted glutathione + a halide anion + H(+). It carries out the reaction 2-glyceryl-prostaglandin H2 = 2-glyceryl-prostaglandin D2. Functionally, bifunctional enzyme which catalyzes both the conversion of PGH2 to PGD2, a prostaglandin involved in smooth muscle contraction/relaxation and a potent inhibitor of platelet aggregation, and the conjugation of glutathione with a wide range of aryl halides, organic isothiocyanates and alpha,beta-unsaturated carbonyls. Also exhibits low glutathione-peroxidase activity towards cumene hydroperoxide and t-butyl hydroperoxide. The polypeptide is Hematopoietic prostaglandin D synthase (HPGDS) (Gallus gallus (Chicken)).